The chain runs to 72 residues: UPF0352 protein swp_2271 (72 aa).

The protein belongs to the UPF0352 family.

The sequence is that of UPF0352 protein swp_2271 from Shewanella piezotolerans (strain WP3 / JCM 13877).